Here is a 602-residue protein sequence, read N- to C-terminus: Lysine--tRNA ligase, chloroplastic/mitochondrial (602 aa).

Low complexity predominate over residues 50–62; sequence SSSSSSATTAETS. The segment at 50 to 83 is disordered; the sequence is SSSSSSATTAETSKPSGRNRRSASSSNSTSDREA. A DNA-binding region (OB) is located at residues 136 to 214; the sequence is VSIAGRVVAR…SICVNSFSIL (79 aa). The substrate site is built by G285 and E309. Residues 331–333 and 339–340 each bind ATP; these read RNE and HN. Substrate is bound by residues E347 and Y349. Ca(2+) is bound by residues E492 and E499. 499 to 500 contacts ATP; that stretch reads EM. Residues N502 and E506 each coordinate substrate. The span at 524 to 543 shows a compositional bias: basic and acidic residues; that stretch reads HNAKRAEAVRESPEPNAKKD. The interval 524–550 is disordered; sequence HNAKRAEAVRESPEPNAKKDDDDDESY. ATP is bound at residue 575-578; it reads GIDR.

The protein belongs to the class-II aminoacyl-tRNA synthetase family. Ca(2+) serves as cofactor.

Its subcellular location is the plastid. The protein resides in the chloroplast. The protein localises to the mitochondrion. It carries out the reaction tRNA(Lys) + L-lysine + ATP = L-lysyl-tRNA(Lys) + AMP + diphosphate. Functionally, catalyzes the specific attachment of an amino acid to its cognate tRNA in a 2 step reaction: the amino acid (AA) is first activated by ATP to form AA-AMP and then transferred to the acceptor end of the tRNA. The chain is Lysine--tRNA ligase, chloroplastic/mitochondrial from Arabidopsis thaliana (Mouse-ear cress).